A 134-amino-acid polypeptide reads, in one-letter code: Prefoldin subunit alpha (134 aa).

The protein belongs to the prefoldin subunit alpha family. As to quaternary structure, heterohexamer of two alpha and four beta subunits.

Its subcellular location is the cytoplasm. Functionally, molecular chaperone capable of stabilizing a range of proteins. Seems to fulfill an ATP-independent, HSP70-like function in archaeal de novo protein folding. The protein is Prefoldin subunit alpha of Pyrobaculum calidifontis (strain DSM 21063 / JCM 11548 / VA1).